We begin with the raw amino-acid sequence, 363 residues long: Glycerol-3-phosphate dehydrogenase [NAD(+)], cytoplasmic (363 aa).

NAD(+) contacts are provided by residues 11 to 16, Phe-98, Lys-121, and Ala-155; that span reads GSGNWG. Lys-121 contributes to the substrate binding site. Catalysis depends on Lys-206, which acts as the Proton acceptor. Positions 270 and 299 each coordinate NAD(+). A substrate-binding site is contributed by 270 to 271; sequence RN.

This sequence belongs to the NAD-dependent glycerol-3-phosphate dehydrogenase family. In terms of assembly, homodimer. Isoform GPDH-1 is predominant in thorax and isoform GPDH-3 in abdomen.

Its subcellular location is the cytoplasm. It carries out the reaction sn-glycerol 3-phosphate + NAD(+) = dihydroxyacetone phosphate + NADH + H(+). It participates in phospholipid metabolism; alpha-glycerophosphate cycle. The protein is Glycerol-3-phosphate dehydrogenase [NAD(+)], cytoplasmic of Drosophila melanogaster (Fruit fly).